The chain runs to 500 residues: Sulfate adenylyltransferase (500 aa).

An N-terminal region spans residues 1–165 (MLSPHGGILQ…LEAIQLPAHY (165 aa)). The tract at residues 166-390 (DYLNLRKSPA…LRQYNPPRYR (225 aa)) is catalytic. Sulfate is bound at residue Gln193. Residues 193-196 (QTRN) and 287-290 (GRDH) contribute to the ATP site. Active-site residues include Thr194, Arg195, and Asn196. Arg195 is a binding site for sulfate. Ala291 is a binding site for sulfate. Residue Ile329 participates in ATP binding. The required for oligomerization; adenylyl-sulfate kinase-like stretch occupies residues 391–500 (QGFVIVVNHE…FLEDNKFFQF (110 aa)).

It belongs to the sulfate adenylyltransferase family. In terms of assembly, homohexamer. Dimer of trimers.

It localises to the cytoplasm. It carries out the reaction sulfate + ATP + H(+) = adenosine 5'-phosphosulfate + diphosphate. It participates in sulfur metabolism; hydrogen sulfide biosynthesis; sulfite from sulfate: step 1/3. Catalyzes the first intracellular reaction of sulfate assimilation, forming adenosine-5'-phosphosulfate (APS) from inorganic sulfate and ATP. Plays an important role in sulfate activation as a component of the biosynthesis pathway of sulfur-containing amino acids. This chain is Sulfate adenylyltransferase, found in Eremothecium gossypii (strain ATCC 10895 / CBS 109.51 / FGSC 9923 / NRRL Y-1056) (Yeast).